Here is a 580-residue protein sequence, read N- to C-terminus: Probable alpha-1,3-mannosyltransferase MNT4 (580 aa).

Residues 1–10 (MVLRIRRIKK) are Cytoplasmic-facing. Residues 11–29 (LAPLIFTSLLSLIVLFRVY) form a helical; Signal-anchor for type II membrane protein membrane-spanning segment. The Lumenal portion of the chain corresponds to 30–580 (RQYPFSDHFE…KVVELWNKVV (551 aa)). Residues Asn132, Asn167, Asn223, and Asn349 are each glycosylated (N-linked (GlcNAc...) asparagine).

Belongs to the MNN1/MNT family.

It is found in the membrane. The sequence is that of Probable alpha-1,3-mannosyltransferase MNT4 (MNT4) from Saccharomyces cerevisiae (strain ATCC 204508 / S288c) (Baker's yeast).